A 61-amino-acid chain; its full sequence is MAKKALIEKSNRKPKYAVRGYTRCQRCGRSRSVYRGFGLCRVCLRQMAHRGELPGVTKSSW.

Zn(2+)-binding residues include Cys24, Cys27, Cys40, and Cys43.

This sequence belongs to the universal ribosomal protein uS14 family. Zinc-binding uS14 subfamily. As to quaternary structure, part of the 30S ribosomal subunit. Contacts proteins S3 and S10. Zn(2+) is required as a cofactor.

Binds 16S rRNA, required for the assembly of 30S particles and may also be responsible for determining the conformation of the 16S rRNA at the A site. This Frankia casuarinae (strain DSM 45818 / CECT 9043 / HFP020203 / CcI3) protein is Small ribosomal subunit protein uS14.